Here is a 95-residue protein sequence, read N- to C-terminus: Small ribosomal subunit protein bS20 (95 aa).

The protein belongs to the bacterial ribosomal protein bS20 family.

Functionally, binds directly to 16S ribosomal RNA. This is Small ribosomal subunit protein bS20 from Ehrlichia canis (strain Jake).